A 1339-amino-acid polypeptide reads, in one-letter code: Receptor tyrosine-protein kinase erbB-3 (1339 aa).

A signal peptide spans 1–19 (MSAIGTLQVLGFLLSLARG). Over 20 to 641 (SEMGNSQAVC…QAEVLMSKPH (622 aa)) the chain is Extracellular. An N-linked (GlcNAc...) asparagine glycan is attached at Asn126. Cystine bridges form between Cys186–Cys194, Cys190–Cys202, Cys210–Cys218, Cys214–Cys226, Cys227–Cys235, Cys231–Cys243, Cys246–Cys255, Cys259–Cys286, Cys290–Cys301, Cys305–Cys320, and Cys323–Cys327. Asn250 is a glycosylation site (N-linked (GlcNAc...) asparagine). 5 N-linked (GlcNAc...) asparagine glycosylation sites follow: Asn353, Asn408, Asn414, Asn437, and Asn469. 10 cysteine pairs are disulfide-bonded: Cys500–Cys509, Cys504–Cys517, Cys520–Cys529, Cys533–Cys549, Cys552–Cys565, Cys556–Cys573, Cys576–Cys585, Cys589–Cys610, Cys613–Cys621, and Cys617–Cys629. Asn522 carries N-linked (GlcNAc...) asparagine glycosylation. Asn566 carries an N-linked (GlcNAc...) asparagine glycan. An N-linked (GlcNAc...) asparagine glycan is attached at Asn616. A helical membrane pass occupies residues 642–662 (LVIAVTVGLTVIFLILGGSFL). The Cytoplasmic portion of the chain corresponds to 663–1339 (YWRGRRIQNK…LFPKANAQRI (677 aa)). Ser684 bears the Phosphoserine mark. A Protein kinase domain is found at 707 to 964 (LRKLKVLGSG…TFKELANEFT (258 aa)). ATP is bound by residues 713–721 (LGSGVFGTV), Lys740, 786–788 (QYL), and 832–837 (DLALRN). Asp832 functions as the Proton acceptor in the catalytic mechanism. Ser980 is modified (phosphoserine). Disordered stretches follow at residues 1028–1052 (LSLPTGTLTRPRGSQSLLSPSSGYM), 1077–1156 (RPIS…GNGY), and 1181–1212 (SVLGTEEEDEDEEYEYMNRKRRGSPARPPRPG). Residues 1185-1195 (TEEEDEDEEYE) show a composition bias toward acidic residues.

It belongs to the protein kinase superfamily. Tyr protein kinase family. EGF receptor subfamily. Monomer and homodimer. Heterodimer with each of the other ERBB receptors (Potential). Interacts with CSPG5, PA2G4, GRB7 and MUC1. Interacts with MYOC. Found in a ternary complex with NRG1 and ITGAV:ITGB3 or ITGA6:ITGB4. In terms of processing, autophosphorylated. Ligand-binding increases phosphorylation on tyrosine residues and promotes its association with the p85 subunit of phosphatidylinositol 3-kinase. As to expression, in the muscle, expression localizes to the synaptic sites of muscle fibers.

It is found in the membrane. The catalysed reaction is L-tyrosyl-[protein] + ATP = O-phospho-L-tyrosyl-[protein] + ADP + H(+). In terms of biological role, tyrosine-protein kinase that plays an essential role as cell surface receptor for neuregulins. Binds to neuregulin-1 (NRG1) and is activated by it; ligand-binding increases phosphorylation on tyrosine residues and promotes its association with the p85 subunit of phosphatidylinositol 3-kinase. May also be activated by CSPG5. Involved in the regulation of myeloid cell differentiation. The protein is Receptor tyrosine-protein kinase erbB-3 (Erbb3) of Mus musculus (Mouse).